The sequence spans 583 residues: Sensor protein SrrB (583 aa).

Over methionine 1–lysine 11 the chain is Cytoplasmic. A helical transmembrane segment spans residues leucine 12–isoleucine 32. At threonine 33 to threonine 174 the chain is on the extracellular side. A helical membrane pass occupies residues isoleucine 175–leucine 195. Residues serine 196–glutamate 583 are Cytoplasmic-facing. The HAMP domain occupies serine 197–aspartate 249. Residues asparagine 366–glutamate 583 enclose the Histidine kinase domain. Histidine 369 carries the phosphohistidine; by autocatalysis modification.

Its subcellular location is the cell membrane. The enzyme catalyses ATP + protein L-histidine = ADP + protein N-phospho-L-histidine.. Functionally, member of the two-component regulatory system SrrA/SrrB, which is involved in the global regulation of staphylococcal virulence factors in response to environmental oxygen levels as well as biofilm formation. Also plays an essential role in host-derived nitric oxide resistance by regulating hmp/flavohemoglobin, an enzyme that detoxifies nitric oxide by converting it to nitrate. Functions as a sensor protein kinase which is autophosphorylated at a histidine residue and transfers its phosphate group to SrrA. In turn, SrrA binds to the upstream promoter regions of the target genes to positively and negatively regulate their expression. This is Sensor protein SrrB (srrB) from Staphylococcus aureus (strain Mu50 / ATCC 700699).